We begin with the raw amino-acid sequence, 336 residues long: Eukaryotic translation initiation factor 3 subunit H (336 aa).

Positions 21-154 constitute an MPN domain; it reads VQCDGLAAMK…LKAYRLTPQA (134 aa).

The protein belongs to the eIF-3 subunit H family. In terms of assembly, component of the eukaryotic translation initiation factor 3 (eIF-3) complex.

The protein resides in the cytoplasm. Functionally, component of the eukaryotic translation initiation factor 3 (eIF-3) complex, which is involved in protein synthesis of a specialized repertoire of mRNAs and, together with other initiation factors, stimulates binding of mRNA and methionyl-tRNAi to the 40S ribosome. The eIF-3 complex specifically targets and initiates translation of a subset of mRNAs involved in cell proliferation. The polypeptide is Eukaryotic translation initiation factor 3 subunit H (Aedes aegypti (Yellowfever mosquito)).